The following is a 301-amino-acid chain: Acetylglutamate kinase (301 aa).

Substrate is bound by residues 72 to 73 (GG), Arg94, and Asn199.

Belongs to the acetylglutamate kinase family. ArgB subfamily.

The protein localises to the cytoplasm. It catalyses the reaction N-acetyl-L-glutamate + ATP = N-acetyl-L-glutamyl 5-phosphate + ADP. It functions in the pathway amino-acid biosynthesis; L-arginine biosynthesis; N(2)-acetyl-L-ornithine from L-glutamate: step 2/4. Its function is as follows. Catalyzes the ATP-dependent phosphorylation of N-acetyl-L-glutamate. In Azorhizobium caulinodans (strain ATCC 43989 / DSM 5975 / JCM 20966 / LMG 6465 / NBRC 14845 / NCIMB 13405 / ORS 571), this protein is Acetylglutamate kinase.